A 255-amino-acid chain; its full sequence is Large ribosomal subunit protein uL4 (255 aa).

It belongs to the universal ribosomal protein uL4 family. In terms of assembly, part of the 50S ribosomal subunit.

Its function is as follows. One of the primary rRNA binding proteins, this protein initially binds near the 5'-end of the 23S rRNA. It is important during the early stages of 50S assembly. It makes multiple contacts with different domains of the 23S rRNA in the assembled 50S subunit and ribosome. Functionally, forms part of the polypeptide exit tunnel. The sequence is that of Large ribosomal subunit protein uL4 from Thermoplasma acidophilum (strain ATCC 25905 / DSM 1728 / JCM 9062 / NBRC 15155 / AMRC-C165).